The following is a 390-amino-acid chain: 8-amino-7-oxononanoate synthase (390 aa).

Residue Arg22 participates in substrate binding. 109–110 contributes to the pyridoxal 5'-phosphate binding site; sequence GY. Residue His134 coordinates substrate. Pyridoxal 5'-phosphate contacts are provided by Ser180, His208, and Thr236. Position 239 is an N6-(pyridoxal phosphate)lysine (Lys239). Thr353 contacts substrate.

It belongs to the class-II pyridoxal-phosphate-dependent aminotransferase family. BioF subfamily. Homodimer. Pyridoxal 5'-phosphate serves as cofactor.

It catalyses the reaction 6-carboxyhexanoyl-[ACP] + L-alanine + H(+) = (8S)-8-amino-7-oxononanoate + holo-[ACP] + CO2. It functions in the pathway cofactor biosynthesis; biotin biosynthesis. In terms of biological role, catalyzes the decarboxylative condensation of pimeloyl-[acyl-carrier protein] and L-alanine to produce 8-amino-7-oxononanoate (AON), [acyl-carrier protein], and carbon dioxide. This Azoarcus sp. (strain BH72) protein is 8-amino-7-oxononanoate synthase.